Here is a 1213-residue protein sequence, read N- to C-terminus: MAVRKKDGGPNVKYYEAADTVTQFDNVRLWLGKNYKKYIQAEPPTNKSLSSLVVQLLQFQEEVFGKHVSNAPLTKLPIKCFLDFKAGGSLCHILAAAYKFKSDQGWRRYDFQNPSRMDRNVEMFMTIEKSLVQNNCLSRPNIFLCPEIEPKLLGKLKDIVKRHQGTISEDKSNASHVVYPVPGNLEEEEWVRPVMKRDKQVLLHWGYYPDSYDTWIPASEIEASVEDAPTPEKPRKVHAKWILDTDTFNEWMNEEDYEVSDDKSPVSRRKKISAKTLTDEVNSPDSDRRDKKGGNYKKRKRSPSPSPTPEAKKKNAKKGPSTPYTKSKRGHREEEQEDLTKDMDEPSPVPNVEEVTLPKTVNTKKDSESAPVKGGTMTDLDEQDDESMETTGKDEDENSTGNKGEQTKNPDLHEDNVTEQTHHIIIPSYAAWFDYNSVHAIERRALPEFFNGKNKSKTPEIYLAYRNFMIDTYRLNPQEYLTSTACRRNLAGDVCAIMRVHAFLEQWGLINYQVDAESRPTPMGPPPTSHFHVLADTPSGLVPLQPKPPQQSSASQQMLNFPEKGKEKPADMQNFGLRTDMYTKKNVPSKSKAAASATREWTEQETLLLLEALEMYKDDWNKVSEHVGSRTQDECILHFLRLPIEDPYLEDSEASLGPLAYQPIPFSQSGNPVMSTVAFLASVVDPRVASAAAKSALEEFSKMKEEVPTALVEAHVRKVEEAAKVTGKADPAFGLESSGIAGTASDEPERIEESGTEEARPEGQAADEKKEPKEPREGGGAVEEEAKEEISEVPKKDEEKGKEGDSEKESEKSDGDPIVDPEKDKEPTEGQEEVLKEVAEPEGERKTKVERDIGEGNLSTAAAAALAAAAVKAKHLAAVEERKIKSLVALLVETQMKKLEIKLRHFEELETIMDREREALEYQRQQLLADRQAFHMEQLKYAEMRARQQHFQQMHQQQQQQPPTLPPGSQPIPPTGAAGPPTVHGLAVPPAAVASAPPGSGAPPGSLGPSEQIGQAGTTAGPQQPQQAGAPQPGAVPPGVPPPGPHGPSPFPNQPTPPSMMPGAVPGSGHPGVAGNAPLGLPFGMPPPPPAAPSVIPFGSLADSISINLPPPPNLHGHHHHLPFAPGTIPPPNLPVSMANPLHPNLPATTTMPSSLPLGPGLGSAAAQSPAIVAAVQGNLLPSASPLPDPGTPLPPDPTAPSPGTVTPVPPPQ.

The interval 1–274 (MAVRKKDGGP…PVSRRKKISA (274 aa)) is marR-like, BRCT and chromo domains module. Positions 10-136 (PNVKYYEAAD…IEKSLVQNNC (127 aa)) constitute a MarR-like domain. A BRCT; N-terminus domain is found at 140 to 183 (PNIFLCPEIEPKLLGKLKDIVKRHQGTISEDKSNASHVVYPVPG). Positions 189 to 217 (EWVRPVMKRDKQVLLHWGYYPDSYDTWIP) constitute a Chromo domain. Residues 233–257 (KPRKVHAKWILDTDTFNEWMNEEDY) form the BRCT; C-terminus domain. The interval 256–413 (DYEVSDDKSP…GEQTKNPDLH (158 aa)) is disordered. Polar residues predominate over residues 275–284 (KTLTDEVNSP). Ser-283, Ser-286, Ser-302, Ser-304, and Ser-306 each carry phosphoserine. The residue at position 312 (Lys-312) is an N6-(ADP-ribosyl)lysine. An N6-acetyllysine modification is found at Lys-326. Positions 331-344 (HREEEQEDLTKDMD) are enriched in basic and acidic residues. Ser-347 and Ser-387 each carry phosphoserine. The span at 379–398 (DLDEQDDESMETTGKDEDEN) shows a compositional bias: acidic residues. An SWIRM domain is found at 424 to 521 (IIIPSYAAWF…YQVDAESRPT (98 aa)). Glycyl lysine isopeptide (Lys-Gly) (interchain with G-Cter in SUMO2) cross-links involve residues Lys-564, Lys-566, Lys-568, and Lys-592. Residues 596-647 (SATREWTEQETLLLLEALEMYKDDWNKVSEHVGSRTQDECILHFLRLPIEDP) enclose the SANT domain. Residue Lys-704 forms a Glycyl lysine isopeptide (Lys-Gly) (interchain with G-Cter in SUMO2) linkage. The tract at residues 724–848 (KVTGKADPAF…AEPEGERKTK (125 aa)) is disordered. The span at 747–777 (EPERIEESGTEEARPEGQAADEKKEPKEPRE) shows a compositional bias: basic and acidic residues. Residue Lys-787 forms a Glycyl lysine isopeptide (Lys-Gly) (interchain with G-Cter in SUMO2) linkage. Positions 788–848 (EEISEVPKKD…AEPEGERKTK (61 aa)) are enriched in basic and acidic residues. At Ser-813 the chain carries Phosphoserine. Lys-848 is covalently cross-linked (Glycyl lysine isopeptide (Lys-Gly) (interchain with G-Cter in SUMO2)). Positions 907–934 (EELETIMDREREALEYQRQQLLADRQAF) form a coiled coil. Disordered regions lie at residues 947-1073 (RQQH…HPGV) and 1181-1213 (LPSA…PPPQ). Low complexity predominate over residues 949-962 (QHFQQMHQQQQQQP). Residues 963 to 974 (PTLPPGSQPIPP) show a composition bias toward pro residues. The span at 975–1033 (TGAAGPPTVHGLAVPPAAVASAPPGSGAPPGSLGPSEQIGQAGTTAGPQQPQQAGAPQP) shows a compositional bias: low complexity. 2 stretches are compositionally biased toward pro residues: residues 1034 to 1060 (GAVP…PPSM) and 1185 to 1201 (SPLP…PTAP).

The protein belongs to the SMARCC family. In terms of assembly, component of the multiprotein chromatin-remodeling complexes SWI/SNF: SWI/SNF-A (BAF), SWI/SNF-B (PBAF) and related complexes. The canonical complex contains a catalytic subunit (either SMARCA4/BRG1/BAF190A or SMARCA2/BRM/BAF190B) and at least SMARCE1, ACTL6A/BAF53, SMARCC1/BAF155, SMARCC2/BAF170, and SMARCB1/SNF5/BAF47. Other subunits specific to each of the complexes may also be present permitting several possible combinations developmentally and tissue specific. Component of the BAF complex, which includes at least actin (ACTB), ARID1A/BAF250A, ARID1B/BAF250B, SMARCA2/BRM, SMARCA4/BRG1, ACTL6A/BAF53, ACTL6B/BAF53B, SMARCE1/BAF57, SMARCC1/BAF155, SMARCC2/BAF170, SMARCB1/SNF5/INI1, and one or more SMARCD1/BAF60A, SMARCD2/BAF60B, or SMARCD3/BAF60C. In muscle cells, the BAF complex also contains DPF3. Component of neural progenitors-specific chromatin remodeling complex (npBAF complex) composed of at least, ARID1A/BAF250A or ARID1B/BAF250B, SMARCD1/BAF60A, SMARCD3/BAF60C, SMARCA2/BRM/BAF190B, SMARCA4/BRG1/BAF190A, SMARCB1/BAF47, SMARCC1/BAF155, SMARCE1/BAF57, SMARCC2/BAF170, PHF10/BAF45A, ACTL6A/BAF53A and actin. Component of neuron-specific chromatin remodeling complex (nBAF complex) composed of at least, ARID1A/BAF250A or ARID1B/BAF250B, SMARCD1/BAF60A, SMARCD3/BAF60C, SMARCA2/BRM/BAF190B, SMARCA4/BRG1/BAF190A, SMARCB1/BAF47, SMARCC1/BAF155, SMARCE1/BAF57, SMARCC2/BAF170, DPF1/BAF45B, DPF3/BAF45C, ACTL6B/BAF53B and actin. Component of the SWI/SNF-B (PBAF) chromatin remodeling complex, at least composed of SMARCA4/BRG1, SMARCB1/BAF47/SNF5, ACTL6A/BAF53A or ACTL6B/BAF53B, SMARCE1/BAF57, SMARCD1/BAF60A, SMARCD2/BAF60B, perhaps SMARCD3/BAF60C, SMARCC1/BAF155, SMARCC2/BAF170, PBRM1/BAF180, ARID2/BAF200 and actin. May also interact with the SIN3A histone deacetylase transcription repressor complex in conjunction with SMARCA2 and SMARCA4. Interacts with SMARD1. Interacts with KDM6B. Interaction with RCOR1. Interacts with DPF2. Interacts with ERCC6. Interacts with FOS. Post-translationally, mono-ADP-ribosylation at Lys-312 by SIRT6 promotes recruitment to the enhancer region of the Heme oxygenase-1 (HO-1) locus, leading to transcription activation of the locus.

The protein resides in the nucleus. In terms of biological role, involved in transcriptional activation and repression of select genes by chromatin remodeling (alteration of DNA-nucleosome topology). Component of SWI/SNF chromatin remodeling complexes that carry out key enzymatic activities, changing chromatin structure by altering DNA-histone contacts within a nucleosome in an ATP-dependent manner. Can stimulate the ATPase activity of the catalytic subunit of these complexes. May be required for CoREST dependent repression of neuronal specific gene promoters in non-neuronal cells. Belongs to the neural progenitors-specific chromatin remodeling complex (npBAF complex) and the neuron-specific chromatin remodeling complex (nBAF complex). During neural development a switch from a stem/progenitor to a postmitotic chromatin remodeling mechanism occurs as neurons exit the cell cycle and become committed to their adult state. The transition from proliferating neural stem/progenitor cells to postmitotic neurons requires a switch in subunit composition of the npBAF and nBAF complexes. As neural progenitors exit mitosis and differentiate into neurons, npBAF complexes which contain ACTL6A/BAF53A and PHF10/BAF45A, are exchanged for homologous alternative ACTL6B/BAF53B and DPF1/BAF45B or DPF3/BAF45C subunits in neuron-specific complexes (nBAF). The npBAF complex is essential for the self-renewal/proliferative capacity of the multipotent neural stem cells. The nBAF complex along with CREST plays a role regulating the activity of genes essential for dendrite growth. Critical regulator of myeloid differentiation, controlling granulocytopoiesis and the expression of genes involved in neutrophil granule formation. The sequence is that of SWI/SNF complex subunit SMARCC2 (Smarcc2) from Mus musculus (Mouse).